Here is a 119-residue protein sequence, read N- to C-terminus: Large ribosomal subunit protein bL12 (119 aa).

Belongs to the bacterial ribosomal protein bL12 family. In terms of assembly, homodimer. Part of the ribosomal stalk of the 50S ribosomal subunit. Forms a multimeric L10(L12)X complex, where L10 forms an elongated spine to which 2 to 4 L12 dimers bind in a sequential fashion. Binds GTP-bound translation factors.

Forms part of the ribosomal stalk which helps the ribosome interact with GTP-bound translation factors. Is thus essential for accurate translation. In Bacillus anthracis (strain A0248), this protein is Large ribosomal subunit protein bL12.